Consider the following 271-residue polypeptide: Tumor necrosis factor receptor superfamily member 4 (271 aa).

A signal peptide spans methionine 1–glycine 19. Residues valine 20–proline 210 lie on the Extracellular side of the membrane. 2 TNFR-Cys repeats span residues asparagine 25–histidine 60 and proline 61–cysteine 102. 8 disulfide bridges follow: cysteine 26–cysteine 37, cysteine 38–cysteine 51, cysteine 41–cysteine 59, cysteine 62–cysteine 76, cysteine 79–cysteine 94, cysteine 82–cysteine 102, cysteine 104–cysteine 122, and cysteine 125–cysteine 138. One copy of the TNFR-Cys 3; truncated repeat lies at glutamine 103 to valine 123. The TNFR-Cys 4 repeat unit spans residues proline 124 to glutamate 164. An N-linked (GlcNAc...) asparagine glycan is attached at asparagine 143. A disulfide bond links cysteine 144 and cysteine 163. The helical transmembrane segment at alanine 211–leucine 235 threads the bilayer. The Cytoplasmic portion of the chain corresponds to arginine 236–isoleucine 271.

Interacts with TRAF2, TRAF3 and TRAF5. Activated T-cells.

The protein localises to the membrane. Functionally, receptor for TNFSF4/OX40L/GP34. Is a costimulatory molecule implicated in long-term T-cell immunity. The sequence is that of Tumor necrosis factor receptor superfamily member 4 (Tnfrsf4) from Rattus norvegicus (Rat).